Consider the following 480-residue polypeptide: UDP-glucose 6-dehydrogenase 5 (480 aa).

Residues 8–13, Asp-33, Arg-38, 86–90, 127–128, and Glu-161 contribute to the NAD(+) site; these read GAGYVG, VNTPT, and ST. Substrate-binding positions include 157 to 161, 216 to 223, and 256 to 269; these read EFLAE, KLAANAFL, and RIGP…VGFG. Cys-272 acts as the Nucleophile in catalysis. Residue 272-275 participates in NAD(+) binding; it reads CFQK. 334-335 provides a ligand contact to substrate; sequence FK. Position 342 (Arg-342) interacts with NAD(+). A Phosphoserine modification is found at Ser-393. Arg-447 lines the substrate pocket.

Belongs to the UDP-glucose/GDP-mannose dehydrogenase family.

The enzyme catalyses UDP-alpha-D-glucose + 2 NAD(+) + H2O = UDP-alpha-D-glucuronate + 2 NADH + 3 H(+). It functions in the pathway nucleotide-sugar biosynthesis; UDP-alpha-D-glucuronate biosynthesis; UDP-alpha-D-glucuronate from UDP-alpha-D-glucose: step 1/1. Its function is as follows. Involved in the biosynthesis of UDP-glucuronic acid (UDP-GlcA), providing nucleotide sugars for cell-wall polymers. In Oryza sativa subsp. japonica (Rice), this protein is UDP-glucose 6-dehydrogenase 5 (UGD5).